A 122-amino-acid polypeptide reads, in one-letter code: Large ribosomal subunit protein uL14 (122 aa).

It belongs to the universal ribosomal protein uL14 family. Part of the 50S ribosomal subunit. Forms a cluster with proteins L3 and L19. In the 70S ribosome, L14 and L19 interact and together make contacts with the 16S rRNA in bridges B5 and B8.

In terms of biological role, binds to 23S rRNA. Forms part of two intersubunit bridges in the 70S ribosome. This is Large ribosomal subunit protein uL14 from Nitratiruptor sp. (strain SB155-2).